A 302-amino-acid chain; its full sequence is Urease accessory protein UreG (302 aa).

Composition is skewed to basic and acidic residues over residues 1 to 32 (MHDP…DHVH), 40 to 56 (HEHE…EHGH), and 64 to 76 (HAHE…THEH). Positions 1-76 (MHDPGEHGHG…EHAHGHTHEH (76 aa)) are disordered. Residue 105-112 (GPVGSGKT) participates in GTP binding.

Belongs to the SIMIBI class G3E GTPase family. UreG subfamily. In terms of assembly, homodimer. UreD, UreF and UreG form a complex that acts as a GTP-hydrolysis-dependent molecular chaperone, activating the urease apoprotein by helping to assemble the nickel containing metallocenter of UreC. The UreE protein probably delivers the nickel.

Its subcellular location is the cytoplasm. Its function is as follows. Facilitates the functional incorporation of the urease nickel metallocenter. This process requires GTP hydrolysis, probably effectuated by UreG. The sequence is that of Urease accessory protein UreG from Sorangium cellulosum (strain So ce56) (Polyangium cellulosum (strain So ce56)).